We begin with the raw amino-acid sequence, 1115 residues long: G-protein coupled receptor GRL101 (1115 aa).

A signal peptide spans 1 to 24 (MATMSGTTIVCLIYLTTMLGNSQG). The Extracellular portion of the chain corresponds to 25–767 (VNLKIESPSP…SCEDLMSNHV (743 aa)). 12 LDL-receptor class A domains span residues 36–79 (TLCS…TCGC), 77–115 (CGCL…ECDI), 116–155 (YICP…ICER), 156–196 (RECV…ACDS), 195–232 (DSDK…NCKL), 231–269 (KLCD…VCAN), 272–318 (YGCP…YCSN), 320–363 (SECK…SCLA), 365–403 (PKCS…NCEN), 404–442 (HQCA…DCDP), 444–485 (PVCE…NCSQ), and 486–525 (HICL…NCRY). 16 cysteine pairs are disulfide-bonded: Cys-38-Cys-53, Cys-46-Cys-66, Cys-60-Cys-77, Cys-79-Cys-91, Cys-86-Cys-104, Cys-98-Cys-113, Cys-118-Cys-131, Cys-138-Cys-153, Cys-158-Cys-170, Cys-165-Cys-183, Cys-177-Cys-194, Cys-202-Cys-220, Cys-214-Cys-230, Cys-233-Cys-245, Cys-240-Cys-258, and Cys-252-Cys-267. Residue Asn-87 is glycosylated (N-linked (GlcNAc...) asparagine). N-linked (GlcNAc...) asparagine glycosylation is present at Asn-166. An N-linked (GlcNAc...) asparagine glycan is attached at Asn-269. 3 cysteine pairs are disulfide-bonded: Cys-274–Cys-291, Cys-282–Cys-304, and Cys-298–Cys-316. An N-linked (GlcNAc...) asparagine glycan is attached at Asn-318. Cystine bridges form between Cys-322–Cys-339, Cys-334–Cys-352, Cys-346–Cys-361, Cys-367–Cys-379, Cys-374–Cys-392, Cys-386–Cys-401, Cys-406–Cys-418, Cys-413–Cys-431, Cys-425–Cys-440, Cys-446–Cys-458, Cys-453–Cys-474, Cys-465–Cys-483, Cys-488–Cys-500, Cys-495–Cys-513, and Cys-507–Cys-523. N-linked (GlcNAc...) asparagine glycosylation is present at Asn-482. An N-linked (GlcNAc...) asparagine glycan is attached at Asn-502. Residues 518–562 (WDENNCRYWCPHGQAICQCEGVTMDCTGQKLKEMPVQQMEEDLSK) form the LRRNT domain. N-linked (GlcNAc...) asparagine glycosylation occurs at Asn-571. LRR repeat units lie at residues 584-605 (KVTY…SFQN), 608-629 (KLTH…SLLG), 632-653 (NLKQ…TFSS), 656-677 (HLTV…MFKG), 680-701 (QITV…AFNN), and 704-725 (NVRL…VFMG). 2 N-linked (GlcNAc...) asparagine glycosylation sites follow: Asn-618 and Asn-624. N-linked (GlcNAc...) asparagine glycosylation occurs at Asn-685. Residues 768–788 (LRVSIWVLGVIALVGNFVVIF) form a helical membrane-spanning segment. Residues 789–801 (WRVRDFRGGKVHS) lie on the Cytoplasmic side of the membrane. Residues 802–822 (FLITNLAIGDFLMGVYLLIIA) form a helical membrane-spanning segment. At 823 to 857 (TADTYYRGVYISHDENWKQSGLCQFAGFVSTFSSE) the chain is on the extracellular side. Residues 858–878 (LSVLTLSTITLDRLICILFPL) form a helical membrane-spanning segment. Residues 879–887 (RRTRLGLRQ) are Cytoplasmic-facing. A helical transmembrane segment spans residues 888–908 (AIIVMSCIWVLVFLLAVLPLL). Residues 909-941 (GFSYFENFYGRSGVCLALHVTPDRRPGWEYSVG) are Extracellular-facing. The helical transmembrane segment at 942–962 (VFILLNLLSFVLIASSYLWMF) threads the bilayer. The Cytoplasmic portion of the chain corresponds to 963–988 (SVAKKTRSAVRTAESKNDNAMARRMT). The chain crosses the membrane as a helical span at residues 989-1009 (LIVMTDFCCWVPIIVLGFVSL). Topologically, residues 1010–1017 (AGARADDQ) are extracellular. The helical transmembrane segment at 1018–1038 (VYAWIAVFVLPLNSATNPVIY) threads the bilayer. Over 1039 to 1115 (TLSTAPFLGN…YYNTELHSDS (77 aa)) the chain is Cytoplasmic.

This sequence belongs to the G-protein coupled receptor 1 family. In terms of tissue distribution, predominantly expressed in a small number of neurons within the central nervous system and to a lesser extent in the heart.

Its subcellular location is the cell membrane. Might directly transduce signals carried by large extracellular lipoprotein complexes into neuronal events. The sequence is that of G-protein coupled receptor GRL101 from Lymnaea stagnalis (Great pond snail).